The following is a 356-amino-acid chain: S-adenosylmethionine:tRNA ribosyltransferase-isomerase (356 aa).

It belongs to the QueA family. In terms of assembly, monomer.

It localises to the cytoplasm. The catalysed reaction is 7-aminomethyl-7-carbaguanosine(34) in tRNA + S-adenosyl-L-methionine = epoxyqueuosine(34) in tRNA + adenine + L-methionine + 2 H(+). Its pathway is tRNA modification; tRNA-queuosine biosynthesis. Functionally, transfers and isomerizes the ribose moiety from AdoMet to the 7-aminomethyl group of 7-deazaguanine (preQ1-tRNA) to give epoxyqueuosine (oQ-tRNA). In Escherichia coli O6:H1 (strain CFT073 / ATCC 700928 / UPEC), this protein is S-adenosylmethionine:tRNA ribosyltransferase-isomerase.